The primary structure comprises 661 residues: Cartilage acidic protein 1 (661 aa).

Positions methionine 1–glycine 27 are cleaved as a signal peptide. An FG-GAP 1; atypical repeat occupies aspartate 46 to alanine 88. An FG-GAP 2; atypical repeat occupies tyrosine 105 to aspartate 147. The stretch at alanine 283–aspartate 333 is one FG-GAP 3; atypical repeat. Residues glycine 395 to glycine 437 form an FG-GAP 4; atypical repeat. Positions aspartate 559–cysteine 605 constitute an EGF-like domain. Intrachain disulfides connect cysteine 563-cysteine 577, cysteine 570-cysteine 586, and cysteine 592-cysteine 605. Residues threonine 608, threonine 618, threonine 619, threonine 621, and threonine 626 are each glycosylated (O-linked (GalNAc...) threonine).

In terms of processing, O-glycosylated. As to expression, expressed in the interterritorial matrix of articular deep zone cartilage (at protein level). Isoform 1 and isoform 2 are expressed in brain. Isoform 1 is detected in lung and chondrocytes. Detected in cartilage, bone, cultured chondrocytes and lung, and at low levels in heart. Not detected in osteoblasts.

Its subcellular location is the secreted. The protein resides in the extracellular space. It localises to the extracellular matrix. The chain is Cartilage acidic protein 1 (CRTAC1) from Homo sapiens (Human).